Consider the following 307-residue polypeptide: Mitochondrial 2-oxodicarboxylate carrier 2 (307 aa).

6 consecutive transmembrane segments (helical) span residues 10-30 (LPFI…LTVM), 76-95 (SRLY…KRAT), 122-142 (IAAG…FELI), 171-191 (GLYK…GGYF), 215-235 (LIAG…FDVV), and 280-300 (CRLA…MNFF). Solcar repeat units follow at residues 10–106 (LPFI…YQKI), 116–200 (TTQK…VRNS), and 209–299 (QKTR…MMNF).

The protein belongs to the mitochondrial carrier (TC 2.A.29) family.

Its subcellular location is the mitochondrion inner membrane. Functionally, transports C5-C7 oxodicarboxylates across the inner membranes of mitochondria. Can transport 2-oxoadipate, 2-oxoglutarate, adipate, glutarate, 2-oxopimelate, oxaloacetate, citrate and malate. The main physiological role is probably to supply 2-oxoadipate and 2-oxoglutarate from the mitochondrial matrix to the cytosol where they are used in the biosynthesis of lysine and glutamate, respectively, and in lysine catabolism. This Saccharomyces cerevisiae (strain ATCC 204508 / S288c) (Baker's yeast) protein is Mitochondrial 2-oxodicarboxylate carrier 2 (ODC2).